The sequence spans 147 residues: Large ribosomal subunit protein uL15 (147 aa).

Residues M1–Q54 are disordered. Over residues T30–V46 the composition is skewed to basic residues.

It belongs to the universal ribosomal protein uL15 family. In terms of assembly, part of the 50S ribosomal subunit.

Functionally, binds to the 23S rRNA. This Thermosipho melanesiensis (strain DSM 12029 / CIP 104789 / BI429) protein is Large ribosomal subunit protein uL15.